Here is a 189-residue protein sequence, read N- to C-terminus: PTS system glucose-specific EIIA component (189 aa).

In terms of domain architecture, PTS EIIA type-1 spans Asp-31–Asn-135. 2 residues coordinate Zn(2+): His-68 and His-83. The active-site Tele-phosphohistidine intermediate; for EIIA activity is the His-83. His-83 carries the phosphohistidine; by HPr modification.

Heterodimer with glycerol kinase (glpk). It depends on Zn(2+) as a cofactor.

Its subcellular location is the cytoplasm. Functionally, the phosphoenolpyruvate-dependent sugar phosphotransferase system (sugar PTS), a major carbohydrate active transport system, catalyzes the phosphorylation of incoming sugar substrates concomitantly with their translocation across the cell membrane. The enzyme II complex composed of PtsG and Crr is involved in glucose transport. This is PTS system glucose-specific EIIA component (crr) from Borreliella burgdorferi (strain ATCC 35210 / DSM 4680 / CIP 102532 / B31) (Borrelia burgdorferi).